Consider the following 183-residue polypeptide: Putative 3-methyladenine DNA glycosylase (183 aa).

It belongs to the DNA glycosylase MPG family.

The polypeptide is Putative 3-methyladenine DNA glycosylase (Legionella pneumophila subsp. pneumophila (strain Philadelphia 1 / ATCC 33152 / DSM 7513)).